The following is a 264-amino-acid chain: Claudin-18 (264 aa).

Residues 1 to 6 (MATTTC) are Cytoplasmic-facing. The chain crosses the membrane as a helical span at residues 7 to 27 (QVVGLLLSLLGLAGCIAATGM). The Extracellular segment spans residues 28–80 (DMWSTQDLYDNPVTAVFQYEGLWRSCVQQSSGFTECRPYFTILGLPAMLQAVR). A helical transmembrane segment spans residues 81 to 101 (ALMIVGIVLGVIGILVSIFAL). The Cytoplasmic portion of the chain corresponds to 102 to 122 (KCIRIGSMDDSAKAKMTLTSG). Residues 123 to 143 (ILFIISGICAIIGVSVFANML) traverse the membrane as a helical segment. Residues 144-176 (VTNFWMSTANMYSGMGGMGGMVQTVQTRYTFGA) lie on the Extracellular side of the membrane. Residues 177–197 (ALFVGWVAGGLTLIGGVMMCI) form a helical membrane-spanning segment. The Cytoplasmic segment spans residues 198 to 264 (ACRGLTPDDS…QSHPTKYDYV (67 aa)). A required for role in regulation of RANKL-induced osteoclast differentiation region spans residues 198-264 (ACRGLTPDDS…QSHPTKYDYV (67 aa)). Ser217 is modified (phosphoserine). A disordered region spans residues 241–264 (KKIYDGGARTEDDEQSHPTKYDYV). Over residues 242-264 (KIYDGGARTEDDEQSHPTKYDYV) the composition is skewed to basic and acidic residues.

Belongs to the claudin family. As to quaternary structure, interacts with TJP2/ZO-2. Interacts with TJP1/ZO-1. Interacts with YAP1 (phosphorylated); the interaction sequesters YAP1 away from the nucleus and thereby restricts transcription of YAP1 target genes. In terms of assembly, interacts with CLDN19. In terms of tissue distribution, expressed in the lung (at protein level). As to expression, expressed in lung. Expressed in the stomach. Expressed in lung. In terms of tissue distribution, expressed in stomach. Expressed in bone. As to expression, expressed in stomach.

It localises to the cell junction. Its subcellular location is the tight junction. It is found in the cell membrane. The protein localises to the lateral cell membrane. Functionally, involved in alveolar fluid homeostasis via regulation of alveolar epithelial tight junction composition and therefore ion transport and solute permeability, potentially via downstream regulation of the actin cytoskeleton organization and beta-2-adrenergic signaling. Required for lung alveolarization and maintenance of the paracellular alveolar epithelial barrier. Acts to maintain epithelial progenitor cell proliferation and organ size, via regulation of YAP1 localization away from the nucleus and thereby restriction of YAP1 target gene transcription. Acts as a negative regulator of RANKL-induced osteoclast differentiation, potentially via relocation of TJP2/ZO-2 away from the nucleus, subsequently involved in bone resorption in response to calcium deficiency. Mediates the osteoprotective effects of estrogen, potentially via acting downstream of estrogen signaling independently of RANKL signaling pathways. Involved in the maintenance of homeostasis of the alveolar microenvironment via regulation of pH and subsequent T-cell activation in the alveolar space, is therefore indirectly involved in limiting C.neoformans infection. In terms of biological role, required for the formation of the gastric paracellular barrier via its role in tight junction formation, thereby involved in the response to gastric acidification. In Mus musculus (Mouse), this protein is Claudin-18 (Cldn18).